Consider the following 1073-residue polypeptide: Error-prone DNA polymerase (1073 aa).

The disordered stretch occupies residues 41-73; the sequence is EAEPECLSTPRPGPGSTEVPGERRGSRQGERSG. Residues 60 to 73 are compositionally biased toward basic and acidic residues; sequence PGERRGSRQGERSG.

It belongs to the DNA polymerase type-C family. DnaE2 subfamily.

Its subcellular location is the cytoplasm. The enzyme catalyses DNA(n) + a 2'-deoxyribonucleoside 5'-triphosphate = DNA(n+1) + diphosphate. Its function is as follows. DNA polymerase involved in damage-induced mutagenesis and translesion synthesis (TLS). It is not the major replicative DNA polymerase. The chain is Error-prone DNA polymerase from Corynebacterium efficiens (strain DSM 44549 / YS-314 / AJ 12310 / JCM 11189 / NBRC 100395).